The sequence spans 93 residues: Large ribosomal subunit protein uL23cz/uL23cy (93 aa).

The protein belongs to the universal ribosomal protein uL23 family. In terms of assembly, part of the 50S ribosomal subunit.

Its subcellular location is the plastid. The protein localises to the chloroplast. In terms of biological role, binds to 23S rRNA. The protein is Large ribosomal subunit protein uL23cz/uL23cy (rpl23-A) of Coffea arabica (Arabian coffee).